Reading from the N-terminus, the 277-residue chain is Undecaprenyl-diphosphatase (277 aa).

Transmembrane regions (helical) follow at residues 3-23 (IVLLIKAAIMGLVEGLTEFLP), 43-63 (VGKVFDIAIQTGAIFAVILVY), 85-105 (LNVLIAFVPAVVLGLLFGKAI), 109-129 (LFTPVVVASTFIIGGFIILWA), 189-209 (TDFSFYLAIPTLIGAGVYSLF), 218-238 (ADLPTFAVGLVVSFFSAWLCI), and 249-269 (SFVGFAYYRIVFGVVVLATAW).

This sequence belongs to the UppP family.

It is found in the cell inner membrane. The enzyme catalyses di-trans,octa-cis-undecaprenyl diphosphate + H2O = di-trans,octa-cis-undecaprenyl phosphate + phosphate + H(+). Catalyzes the dephosphorylation of undecaprenyl diphosphate (UPP). Confers resistance to bacitracin. This chain is Undecaprenyl-diphosphatase, found in Albidiferax ferrireducens (strain ATCC BAA-621 / DSM 15236 / T118) (Rhodoferax ferrireducens).